Here is a 217-residue protein sequence, read N- to C-terminus: Formate dehydrogenase, nitrate-inducible, cytochrome b556(Fdn) subunit (217 aa).

The Cytoplasmic portion of the chain corresponds to 1–11 (MSKSKMIVRTK). The helical transmembrane segment at 12-36 (FIDRACHWTVVICFFLVALSGISFF) threads the bilayer. Heme b is bound at residue His18. At 37–52 (FPTLQWLTQTFGTPQM) the chain is on the periplasmic side. Residues 53 to 74 (GRILHPFFGIAIFVALMFMFVR) traverse the membrane as a helical segment. Residue His57 participates in heme b binding. Residues 75 to 110 (FVHHNIPDKKDIPWLLNIVEVLKGNEHKVADVGKYN) lie on the Cytoplasmic side of the membrane. A helical membrane pass occupies residues 111–134 (AGQKMMFWSIMSMIFVLLVTGVII). The Periplasmic segment spans residues 135 to 150 (WRPYFAQYFPMQVVRY). A helical transmembrane segment spans residues 151–175 (SLLIHAAAGIILIHAILIHMYMAFW). Heme b contacts are provided by His155 and His169. His169 is an a menaquinone binding site. Residues 176-217 (VKGSIKGMIEGKVSRRWAKKHHPRWYREIEKAEAKKESEEGI) lie on the Cytoplasmic side of the membrane.

Belongs to the formate dehydrogenase gamma subunit family. In terms of assembly, trimer of heterotrimers, consisting of subunits alpha, beta and gamma. Heme is required as a cofactor.

Its subcellular location is the cell inner membrane. In terms of biological role, formate dehydrogenase allows the bacterium to use formate as major electron donor during anaerobic respiration, when nitrate is used as electron acceptor. Subunit gamma is the cytochrome b556 component of the formate dehydrogenase-N, and also contains a menaquinone reduction site that receives electrons from the beta subunit (FdnH), through its hemes. Formate dehydrogenase-N is part of a system that generates proton motive force, together with the dissimilatory nitrate reductase (Nar). The polypeptide is Formate dehydrogenase, nitrate-inducible, cytochrome b556(Fdn) subunit (fdnI) (Escherichia coli O157:H7).